The primary structure comprises 189 residues: Orotate phosphoribosyltransferase (189 aa).

5-phospho-alpha-D-ribose 1-diphosphate is bound by residues arginine 99, lysine 100, lysine 103, histidine 105, and 126–134 (EDVITTGGS). Threonine 130 and arginine 158 together coordinate orotate.

This sequence belongs to the purine/pyrimidine phosphoribosyltransferase family. PyrE subfamily. In terms of assembly, homodimer. Requires Mg(2+) as cofactor.

The catalysed reaction is orotidine 5'-phosphate + diphosphate = orotate + 5-phospho-alpha-D-ribose 1-diphosphate. Its pathway is pyrimidine metabolism; UMP biosynthesis via de novo pathway; UMP from orotate: step 1/2. Its function is as follows. Catalyzes the transfer of a ribosyl phosphate group from 5-phosphoribose 1-diphosphate to orotate, leading to the formation of orotidine monophosphate (OMP). This is Orotate phosphoribosyltransferase from Thermosynechococcus vestitus (strain NIES-2133 / IAM M-273 / BP-1).